The following is an 854-amino-acid chain: Translation initiation factor IF-2 (854 aa).

2 disordered regions span residues 52 to 79 and 128 to 265; these read RQHG…RDGG and RKQE…HGFQ. The segment covering 61-75 has biased composition (polar residues); it reads SQRITLQRKTTSTLS. Composition is skewed to basic and acidic residues over residues 128-150 and 211-232; these read RKQE…RQEA and VRHD…DNKR. The segment covering 247-257 has biased composition (basic residues); that stretch reads RGKLGRKNKKP. Residues 354-523 form the tr-type G domain; the sequence is KRAPVVTVMG…LLQAEVLELT (170 aa). The interval 363–370 is G1; it reads GHVDHGKT. A GTP-binding site is contributed by 363-370; it reads GHVDHGKT. The interval 388–392 is G2; the sequence is GITQH. Residues 409–412 are G3; the sequence is DTPG. 409–413 is a GTP binding site; the sequence is DTPGH. The segment at 463–466 is G4; the sequence is TKID. The interval 499 to 501 is G5; the sequence is SAK.

It belongs to the TRAFAC class translation factor GTPase superfamily. Classic translation factor GTPase family. IF-2 subfamily.

The protein resides in the cytoplasm. One of the essential components for the initiation of protein synthesis. Protects formylmethionyl-tRNA from spontaneous hydrolysis and promotes its binding to the 30S ribosomal subunits. Also involved in the hydrolysis of GTP during the formation of the 70S ribosomal complex. This Marinomonas sp. (strain MWYL1) protein is Translation initiation factor IF-2.